We begin with the raw amino-acid sequence, 244 residues long: Cell division protein ZapD (244 aa).

It belongs to the ZapD family. As to quaternary structure, interacts with FtsZ.

The protein localises to the cytoplasm. In terms of biological role, cell division factor that enhances FtsZ-ring assembly. Directly interacts with FtsZ and promotes bundling of FtsZ protofilaments, with a reduction in FtsZ GTPase activity. The polypeptide is Cell division protein ZapD (Shewanella baltica (strain OS223)).